A 192-amino-acid polypeptide reads, in one-letter code: Dynein axonemal light chain 1 (192 aa).

LRR repeat units lie at residues 49–70 (NCEK…NGLK), 71–92 (YLKI…EAVG), 94–115 (TLEE…HVMK), and 116–137 (KLKV…SKLG). Positions 150 to 192 (NPLEEKHTAEGNWMEEAVKRLPKLKKLDGNPVIKQEEEEGDES) constitute an LRRCT domain.

The protein belongs to the dynein light chain LC1-type family. Interacts with DNAH5, a outer arm dynein heavy chain. Interacts with tubulin located within the A-tubule of the outer doublets in a ATP-independent manner.

The protein localises to the cytoplasm. It localises to the cytoskeleton. It is found in the cilium axoneme. Part of the multisubunit axonemal ATPase complexes that generate the force for cilia motility and govern beat frequency. Component of the outer arm dynein (ODA). May be involved in a mechanosensory feedback mechanism controlling ODA activity based on external conformational cues by tethering the outer arm dynein heavy chain (DNAH5) to the microtubule within the axoneme. This is Dynein axonemal light chain 1 (dnal1) from Xenopus laevis (African clawed frog).